A 1125-amino-acid chain; its full sequence is Kinase and exchange factor for Rac B (1125 aa).

Disordered stretches follow at residues 50 to 175, 247 to 287, and 322 to 362; these read VTGG…ASIN, SVPG…GGKF, and KTRD…VNSD. Residues 59-91 are compositionally biased toward low complexity; sequence NNQQQQQNNNNNNNNNNNNNNNNNNNNNNNNNN. Over residues 92-106 the composition is skewed to polar residues; that stretch reads SGEISSNNSTPSILF. Positions 113-124 are enriched in pro residues; it reads TAPPAPPQPTTP. The span at 137–161 shows a compositional bias: low complexity; the sequence is NINQQPIGGVNNNNNNNNKDSPSNK. The 192-residue stretch at 380-571 folds into the DH domain; the sequence is KRRQVSLQIL…KSTVDYVKEK (192 aa). Residues 601–822 form the PH domain; that stretch reads RYVREGMLTE…WIQAIHANII (222 aa). Disordered regions lie at residues 693–729 and 761–791; these read INNM…SNNN and SNNN…YSNG. Residues 694 to 729 show a composition bias toward low complexity; it reads NNMTNNDSKSKNNNNNNSNGNNNNNNINSNSNSNNN. The 270-residue stretch at 848–1117 folds into the Protein kinase domain; it reads IKLCEQIGSG…QLVQKLTKML (270 aa). Residues 854–862 and lysine 876 each bind ATP; that span reads IGSGGSGCT. The active-site Proton acceptor is aspartate 971.

The protein belongs to the protein kinase superfamily. STE Ser/Thr protein kinase family. The cofactor is Mg(2+).

The enzyme catalyses L-seryl-[protein] + ATP = O-phospho-L-seryl-[protein] + ADP + H(+). It carries out the reaction L-threonyl-[protein] + ATP = O-phospho-L-threonyl-[protein] + ADP + H(+). The sequence is that of Kinase and exchange factor for Rac B from Dictyostelium discoideum (Social amoeba).